We begin with the raw amino-acid sequence, 98 residues long: NADH-ubiquinone oxidoreductase chain 4L (98 aa).

3 helical membrane passes run 1 to 21 (MTSI…GVLM), 28 to 48 (STLL…SLLI), and 59 to 79 (APLI…ALLV).

This sequence belongs to the complex I subunit 4L family. Core subunit of respiratory chain NADH dehydrogenase (Complex I) which is composed of 45 different subunits.

The protein localises to the mitochondrion inner membrane. It catalyses the reaction a ubiquinone + NADH + 5 H(+)(in) = a ubiquinol + NAD(+) + 4 H(+)(out). Its function is as follows. Core subunit of the mitochondrial membrane respiratory chain NADH dehydrogenase (Complex I) which catalyzes electron transfer from NADH through the respiratory chain, using ubiquinone as an electron acceptor. Part of the enzyme membrane arm which is embedded in the lipid bilayer and involved in proton translocation. The protein is NADH-ubiquinone oxidoreductase chain 4L (MT-ND4L) of Phascolarctos cinereus (Koala).